Consider the following 263-residue polypeptide: Probable ABC transporter permease protein ycf63 (263 aa).

Helical transmembrane passes span 43-63 (LVGP…SMVF), 82-102 (AVIV…VIIA), 136-156 (LVFP…TISL), 159-179 (SIAI…SIFL), 199-219 (LCFG…SSGG), and 230-250 (SVVT…YFMF).

This sequence belongs to the MlaE permease family.

It localises to the plastid. The protein resides in the chloroplast membrane. In terms of biological role, could be part of an ABC transporter complex. This chain is Probable ABC transporter permease protein ycf63 (ycf63), found in Porphyra purpurea (Red seaweed).